The following is a 506-amino-acid chain: Galactose/methyl galactoside import ATP-binding protein MglA (506 aa).

2 ABC transporter domains span residues 14 to 249 (LTMT…VGRE) and 260 to 506 (TPKE…AKYL). 46-53 (GENGAGKS) is a binding site for ATP.

Belongs to the ABC transporter superfamily. Galactose/methyl galactoside importer (TC 3.A.1.2.3) family. The complex is composed of one ATP-binding protein (MglA), two transmembrane proteins (MglC) and a solute-binding protein (MglB).

The protein resides in the cell inner membrane. The enzyme catalyses D-galactose(out) + ATP + H2O = D-galactose(in) + ADP + phosphate + H(+). It carries out the reaction methyl beta-D-galactoside(out) + ATP + H2O = methyl beta-D-galactoside(in) + ADP + phosphate + H(+). Part of the ABC transporter complex MglABC involved in galactose/methyl galactoside import. Responsible for energy coupling to the transport system. The protein is Galactose/methyl galactoside import ATP-binding protein MglA of Pasteurella multocida (strain Pm70).